The following is a 273-amino-acid chain: Phosphatidylglycerol--prolipoprotein diacylglyceryl transferase (273 aa).

The next 7 membrane-spanning stretches (helical) occupy residues 21 to 41 (VSVR…LWLA), 60 to 80 (LLFA…VIFY), 95 to 115 (VWTG…AMFW), 124 to 144 (FFGV…MGRM), 176 to 196 (SQLY…NWFI), 203 to 223 (GAVS…VEFV), and 237 to 257 (ISMG…MMVW). Arginine 143 serves as a coordination point for a 1,2-diacyl-sn-glycero-3-phospho-(1'-sn-glycerol).

This sequence belongs to the Lgt family.

It localises to the cell inner membrane. It catalyses the reaction L-cysteinyl-[prolipoprotein] + a 1,2-diacyl-sn-glycero-3-phospho-(1'-sn-glycerol) = an S-1,2-diacyl-sn-glyceryl-L-cysteinyl-[prolipoprotein] + sn-glycerol 1-phosphate + H(+). Its pathway is protein modification; lipoprotein biosynthesis (diacylglyceryl transfer). Its function is as follows. Catalyzes the transfer of the diacylglyceryl group from phosphatidylglycerol to the sulfhydryl group of the N-terminal cysteine of a prolipoprotein, the first step in the formation of mature lipoproteins. This is Phosphatidylglycerol--prolipoprotein diacylglyceryl transferase from Vibrio campbellii (strain ATCC BAA-1116).